We begin with the raw amino-acid sequence, 1419 residues long: MIRLGAPQSLVLLTLLIATVLQCQGQDARKLGPKGQKGEPGDIKDIIGPKGPPGPQGPAGEQGPRGDRGDKGERGAPGPRGRDGEPGTPGNPGPPGPPGPPGPPGLGGGNFAAQMAGGFDEKAGGAQMGVMQGPMGPMGPRGPPGPAGAPGPQGFQGNPGEPGEPGVSGPIGPRGPPGPAGKPGDDGEAGKPGKAGERGLPGPQGARGFPGTPGLPGVKGHRGYPGLDGAKGEAGAPGVKGESGSPGENGSPGPMGPRGLPGERGRTGPAGAAGARGNDGQPGPAGPPGPVGPAGGPGFLGAPGAKGEAGPTGARGPEGAQGSRGEPGNPGSPGPAGASGNPGTDGIPGAKGSAGAPGIAGAPGFPGPRGPPGPQGATGPLGPKGQTGEPGIAGFKGEQGPKGETGPAGPQGAPGPAGEEGKRGARGEPGGAGPIGPPGERGAPGNRGFPGQDGLAGPKGAPGERGPSGLAGPKGANGDPGRPGEPGLPGARGLTGRPGDAGPQGKVGPSGAPGEDGRPGPPGPQGARGQPGVMGFPGPKGANGEPGKAGEKGLAGAPGLRGLPGKDGETGAAGPPGPSGPAGERGEQGAPGPSGFQGLPGPPGPPGEGGKQGDQGIPGEAGAPGLVGPRGERGFPGERGSPGAQGLQGPRGLPGTPGTDGPKGAAGPDGPPGAQGPPGLQGMPGERGAAGIAGPKGDRGDVGEKGPEGAPGKDGGRGLTGPIGPPGPAGANGEKGEVGPPGPSGSTGARGAPGERGETGPPGPAGFAGPPGADGQPGAKGDQGEAGQKGDAGAPGPQGPSGAPGPQGPTGVTGPKGARGAQGPPGATGFPGAAGRVGPPGSNGNPGPAGPPGPAGKDGPKGARGDTGAPGRAGDPGLQGPAGAPGEKGEPGDDGPSGSDGPPGPQGLAGQRGIVGLPGQRGERGFPGLPGPSGEPGKQGAPGASGDRGPPGPVGPPGLTGPAGEPGREGSPGADGPPGRDGAAGVKGDRGETGALGAPGAPGPPGSPGPAGPTGKQGDRGEAGAQGPMGPSGPAGARGIAGPQGPRGDKGEAGEPGERGLKGHRGFTGLQGLPGPPGPSGDQGTSGPAGPSGPRGPPGPVGPSGKDGSNGIPGPIGPPGPRGRSGETGPAGPPGNPGPPGPPGPPGPGIDMSAFAGLGQREKGPDPLQYMRADEADSTLRQHDVEVDATLKSLNNQIESIRSPDGSRKNPARTCQDLKLCHPEWKSGDYWIDPNQGCTLDAMKVFCNMETGESCVYPNPATVPRKNWWSSKSKEKKHIWFGETMNGGFHFSYGDGNLAPNTANVQMTFLRLLSTEGSQNITYHCKNSIAYLDEAAGNLKKALLIQGSNDVEMRAEGNSRFTYTALKDGCTKHTGKWGKTIIEYRSQKTSRLPIVDIAPMDIGGPDQEFGVDIGPVCFL.

An N-terminal signal peptide occupies residues 1 to 25; the sequence is MIRLGAPQSLVLLTLLIATVLQCQG. A propeptide spans 26 to 113 (N-terminal propeptide); it reads QDARKLGPKG…PGLGGGNFAA (88 aa). The segment at 28–1168 is disordered; that stretch reads ARKLGPKGQK…GQREKGPDPL (1141 aa). 2 stretches are compositionally biased toward basic and acidic residues: residues 36-47 and 64-85; these read QKGEPGDIKDII and PRGD…RDGE. Residues 89–104 are compositionally biased toward pro residues; that stretch reads PGNPGPPGPPGPPGPP. K122 is modified (5-hydroxylysine). K122 carries an O-linked (Gal...) hydroxylysine glycan. Residues 124-135 show a composition bias toward low complexity; it reads GGAQMGVMQGPM. The segment at 133-1146 is triple-helical region; sequence GPMGPMGPRG…PGPPGPPGPP (1014 aa). Pro residues predominate over residues 140 to 149; the sequence is PRGPPGPAGA. The span at 150–171 shows a compositional bias: low complexity; the sequence is PGPQGFQGNPGEPGEPGVSGPI. Over residues 183-197 the composition is skewed to basic and acidic residues; it reads PGDDGEAGKPGKAGE. A 5-hydroxylysine mark is found at K219, K231, and K240. O-linked (Gal...) hydroxylysine glycans are attached at residues K219, K231, and K240. 2 stretches are compositionally biased toward low complexity: residues 242–252 and 267–282; these read ESGSPGENGSP and TGPA…DGQP. Over residues 292–301 the composition is skewed to gly residues; the sequence is GPAGGPGFLG. K306 is modified (5-hydroxylysine). A glycan (O-linked (Gal...) hydroxylysine) is linked at K306. The span at 335–363 shows a compositional bias: low complexity; the sequence is PAGASGNPGTDGIPGAKGSAGAPGIAGAP. Positions 365–374 are enriched in pro residues; that stretch reads FPGPRGPPGP. The segment covering 404-417 has biased composition (low complexity); sequence ETGPAGPQGAPGPA. 2 positions are modified to 5-hydroxylysine: K540 and K552. K540 and K552 each carry an O-linked (Gal...) hydroxylysine glycan. The segment covering 554 to 563 has biased composition (low complexity); sequence LAGAPGLRGL. 2 positions are modified to 4-hydroxyproline: P591 and P600. 3-hydroxyproline; partial is present on P602. 2 positions are modified to 4-hydroxyproline: P603 and P606. Positions 638–668 are enriched in low complexity; sequence ERGSPGAQGLQGPRGLPGTPGTDGPKGAAGP. Residues 696–707 are compositionally biased toward basic and acidic residues; sequence KGDRGDVGEKGP. Low complexity-rich tracts occupy residues 765 to 780 and 809 to 846; these read AGFA…PGAK and PTGV…NGNP. P839 carries the post-translational modification 3-hydroxyproline; partial. 4-hydroxyproline occurs at positions 840, 846, and 852. Residues 1001–1011 are compositionally biased toward pro residues; the sequence is APGPPGSPGPA. Over residues 1047-1061 the composition is skewed to basic and acidic residues; sequence RGDKGEAGEPGERGL. A 3-hydroxyproline; partial modification is found at P1076. Composition is skewed to low complexity over residues 1080-1089 and 1103-1113; these read SGDQGTSGPA and PSGKDGSNGIP. P1113 is modified (4-hydroxyproline). Residue P1118 is modified to 3-hydroxyproline. P1119 carries the 4-hydroxyproline modification. Over residues 1131–1148 the composition is skewed to pro residues; sequence AGPPGNPGPPGPPGPPGP. A 3-hydroxyproline; partial modification is found at P1133. 2 positions are modified to 4-hydroxyproline: P1134 and P1137. The residue at position 1139 (P1139) is a 3-hydroxyproline; partial. 2 positions are modified to 4-hydroxyproline: P1140 and P1143. P1145 carries the post-translational modification 3-hydroxyproline; partial. Position 1146 is a 4-hydroxyproline (P1146). Positions 1147–1173 are nonhelical region (C-terminal); it reads GPGIDMSAFAGLGQREKGPDPLQYMRA. The Fibrillar collagen NC1 domain maps to 1185 to 1419; sequence VEVDATLKSL…GVDIGPVCFL (235 aa). 3 cysteine pairs are disulfide-bonded: C1215/C1247, C1255/C1417, and C1325/C1370. The Ca(2+) site is built by D1233, N1235, Q1236, C1238, and D1241. The N-linked (GlcNAc...) asparagine glycan is linked to N1320.

It belongs to the fibrillar collagen family. In terms of assembly, homotrimers of alpha 1(II) chains. Contains mostly 4-hydroxyproline. Prolines at the third position of the tripeptide repeating unit (G-X-P) are 4-hydroxylated in some or all of the chains. In terms of processing, contains 3-hydroxyproline at a few sites. This modification occurs on the first proline residue in the sequence motif Gly-Pro-Hyp, where Hyp is 4-hydroxyproline. Post-translationally, lysine residues at the third position of the tripeptide repeating unit (G-X-Y) are 5-hydroxylated in some or all of the chains. O-glycosylated on hydroxylated lysine residues. The O-linked glycan consists of a Glc-Gal disaccharide. In terms of tissue distribution, expressed in chondrocytes.

Its subcellular location is the secreted. The protein localises to the extracellular space. It localises to the extracellular matrix. In terms of biological role, type II collagen is specific for cartilaginous tissues. It is essential for the normal embryonic development of the skeleton, for linear growth and for the ability of cartilage to resist compressive forces. This is Collagen alpha-1(II) chain from Rattus norvegicus (Rat).